A 364-amino-acid chain; its full sequence is MNNKTRKVLVPLIAIVFGFLLGAIIMLAFGYNPIWGYEDLFISALGSARSIGETLQTMGPLILTALSFAVAMKVGLFNIGMSGQALAGWISSMWFALSFPDIPRLLMIPLVVIIGMVFGAFMGFIPGILRALLGTSEVITTIMLNYIMLFFSTFMIHSMFQKNILMDNTTDQTKLISANASFRTNWMSSLTDNSTLNIGLIIAIIALVIMAIIFTKTTLGFEIKAVGLNPDASEYAGISAKRTLILSMVVAGALAGLGGVVYGFGYMQNFVSQSASLDIGFYGMAVALLGGNSPIGILFAALLFSVLQTGAPGMTNDGIPPEIVKVVTAAIIFFIAVKFIIEVMLPKAKAIKASEATKKKGEKA.

8 helical membrane passes run 9–29, 77–99, 105–125, 138–158, 195–215, 244–264, 284–304, and 326–346; these read LVPL…MLAF, FNIG…ALSF, LLMI…MGFI, VITT…MIHS, TLNI…IIFT, LILS…VYGF, MAVA…ALLF, and VVTA…VMLP.

Belongs to the binding-protein-dependent transport system permease family. In terms of assembly, the complex is composed of two ATP-binding proteins (NupA), two transmembrane proteins (NupB and NupC) and a solute-binding protein (BmpA).

Its subcellular location is the cell membrane. In terms of biological role, part of an ABC transporter complex involved in the uptake of all common nucleosides. Responsible for the translocation of the substrate across the membrane. This chain is Nucleoside ABC transporter permease protein NupB, found in Lactococcus lactis subsp. cremoris (strain MG1363).